The following is a 187-amino-acid chain: Aspartic protease inhibitor 9 (187 aa).

The N-linked (GlcNAc...) asparagine glycan is linked to Asn-19. Disulfide bonds link Cys-48–Cys-93 and Cys-142–Cys-158.

This sequence belongs to the protease inhibitor I3 (leguminous Kunitz-type inhibitor) family. Post-translationally, glycosylated. As to expression, tubers.

It is found in the vacuole. Its function is as follows. Inhibitor of cathepsin D (aspartic protease) and trypsin (serine protease). May protect the plant by inhibiting proteases of invading organisms. The protein is Aspartic protease inhibitor 9 of Solanum tuberosum (Potato).